A 192-amino-acid polypeptide reads, in one-letter code: uncharacterized protein (192 aa).

The Nudix hydrolase domain maps to glutamine 29 to histidine 160. The Nudix box motif lies at glycine 67–alanine 89. Mg(2+) is bound by residues glutamate 83 and glutamate 87.

It belongs to the Nudix hydrolase family. PCD1 subfamily. Mn(2+) is required as a cofactor. It depends on Mg(2+) as a cofactor.

Its function is as follows. Probably mediates the hydrolysis of some nucleoside diphosphate derivatives. This is an uncharacterized protein from Cronobacter sakazakii (strain ATCC BAA-894) (Enterobacter sakazakii).